Consider the following 166-residue polypeptide: Small ribosomal subunit protein uS5 (166 aa).

An S5 DRBM domain is found at 11 to 74 (LQEKLIAVNR…EKARRNMINV (64 aa)).

It belongs to the universal ribosomal protein uS5 family. As to quaternary structure, part of the 30S ribosomal subunit. Contacts proteins S4 and S8.

Its function is as follows. With S4 and S12 plays an important role in translational accuracy. Functionally, located at the back of the 30S subunit body where it stabilizes the conformation of the head with respect to the body. This Haemophilus influenzae (strain 86-028NP) protein is Small ribosomal subunit protein uS5.